We begin with the raw amino-acid sequence, 192 residues long: Transmembrane protein 276 (192 aa).

A signal peptide spans Met-1–Ala-32. 4 helical membrane passes run Gly-35–Leu-55, Ala-63–Val-83, Ser-89–Pro-109, and Val-114–Thr-134.

Its subcellular location is the membrane. The protein is Transmembrane protein 276 of Homo sapiens (Human).